Reading from the N-terminus, the 456-residue chain is Divalent metal cation transporter MntH (456 aa).

11 consecutive transmembrane segments (helical) span residues 47 to 67 (ALSFFGPGYLVAVGYMDPGNW), 77 to 97 (FGYALLSVVLLSNLMAVLLQA), 123 to 143 (AWPLWLLAELAICATDLAEVI), 151 to 171 (LLFGIPLEIGVILTAVDVLLV), 184 to 204 (ALIITLLGVIALCFLTQIIMA), 227 to 247 (MLYIALGIIGATVMPHNLYLH), 276 to 296 (IALTFALVINASILILAAASF), 316 to 336 (PLLGSAIAPALFAIALLCCGL), 369 to 389 (FVAIVPAAIVTILYGSQGTTE), 392 to 412 (ILSQVVLSLQLPFAVIPLVIF), and 422 to 442 (LAAAPWVTFLAAITAAIIVVL).

This sequence belongs to the NRAMP family.

It localises to the cell inner membrane. H(+)-stimulated, divalent metal cation uptake system. The protein is Divalent metal cation transporter MntH of Brucella suis biovar 1 (strain 1330).